A 433-amino-acid chain; its full sequence is Glucoside xylosyltransferase 1 (433 aa).

Over 1–6 (MRRFAR) the chain is Cytoplasmic. Residues 7 to 29 (VALLFLGCGVCSLLYGVSQLALS) traverse the membrane as a helical; Signal-anchor for type II membrane protein segment. Residues 30–433 (LEQEAGGARQ…DLSVRRSKGS (404 aa)) are Lumenal-facing. The segment at 39 to 64 (QRQARESAAPGGGRQAGSADGGEEGA) is disordered. Asparagine 69, asparagine 166, asparagine 271, asparagine 305, and asparagine 380 each carry an N-linked (GlcNAc...) asparagine glycan.

The protein belongs to the glycosyltransferase 8 family.

The protein localises to the membrane. It catalyses the reaction 3-O-(beta-D-glucosyl)-L-seryl-[EGF-like domain protein] + UDP-alpha-D-xylose = 3-O-[alpha-D-xylosyl-(1-&gt;3)-beta-D-glucosyl]-L-seryl-[EGF-like domain protein] + UDP + H(+). Functionally, glycosyltransferase which elongates the O-linked glucose attached to EGF-like repeats in the extracellular domain of Notch proteins by catalyzing the addition of xylose. In Gallus gallus (Chicken), this protein is Glucoside xylosyltransferase 1 (GXYLT1).